Here is a 212-residue protein sequence, read N- to C-terminus: Large ribosomal subunit protein uL3 (212 aa).

An N5-methylglutamine modification is found at glutamine 153.

This sequence belongs to the universal ribosomal protein uL3 family. Part of the 50S ribosomal subunit. Forms a cluster with proteins L14 and L19. In terms of processing, methylated by PrmB.

Functionally, one of the primary rRNA binding proteins, it binds directly near the 3'-end of the 23S rRNA, where it nucleates assembly of the 50S subunit. This chain is Large ribosomal subunit protein uL3, found in Shewanella piezotolerans (strain WP3 / JCM 13877).